A 364-amino-acid polypeptide reads, in one-letter code: Aminomethyltransferase (364 aa).

Belongs to the GcvT family. In terms of assembly, the glycine cleavage system is composed of four proteins: P, T, L and H.

The catalysed reaction is N(6)-[(R)-S(8)-aminomethyldihydrolipoyl]-L-lysyl-[protein] + (6S)-5,6,7,8-tetrahydrofolate = N(6)-[(R)-dihydrolipoyl]-L-lysyl-[protein] + (6R)-5,10-methylene-5,6,7,8-tetrahydrofolate + NH4(+). The glycine cleavage system catalyzes the degradation of glycine. The polypeptide is Aminomethyltransferase (Shewanella baltica (strain OS223)).